A 424-amino-acid chain; its full sequence is Histidine--tRNA ligase (424 aa).

This sequence belongs to the class-II aminoacyl-tRNA synthetase family. In terms of assembly, homodimer.

The protein resides in the cytoplasm. It catalyses the reaction tRNA(His) + L-histidine + ATP = L-histidyl-tRNA(His) + AMP + diphosphate + H(+). This chain is Histidine--tRNA ligase, found in Shewanella amazonensis (strain ATCC BAA-1098 / SB2B).